Here is a 343-residue protein sequence, read N- to C-terminus: UDP-3-O-acylglucosamine N-acyltransferase (343 aa).

His-236 functions as the Proton acceptor in the catalytic mechanism.

This sequence belongs to the transferase hexapeptide repeat family. LpxD subfamily. In terms of assembly, homotrimer.

The enzyme catalyses a UDP-3-O-[(3R)-3-hydroxyacyl]-alpha-D-glucosamine + a (3R)-hydroxyacyl-[ACP] = a UDP-2-N,3-O-bis[(3R)-3-hydroxyacyl]-alpha-D-glucosamine + holo-[ACP] + H(+). Its pathway is bacterial outer membrane biogenesis; LPS lipid A biosynthesis. Its function is as follows. Catalyzes the N-acylation of UDP-3-O-acylglucosamine using 3-hydroxyacyl-ACP as the acyl donor. Is involved in the biosynthesis of lipid A, a phosphorylated glycolipid that anchors the lipopolysaccharide to the outer membrane of the cell. The chain is UDP-3-O-acylglucosamine N-acyltransferase from Syntrophotalea carbinolica (strain DSM 2380 / NBRC 103641 / GraBd1) (Pelobacter carbinolicus).